Consider the following 106-residue polypeptide: Toxin-like structure LSTX-D9 (106 aa).

Positions M1–S20 are cleaved as a signal peptide. Positions D21–R41 are excised as a propeptide. 4 disulfide bridges follow: C45-C60, C52-C69, C59-C85, and C71-C83.

The protein belongs to the neurotoxin 19 (CSTX) family. 02 (D7) subfamily. Expressed by the venom gland.

Its subcellular location is the secreted. The protein is Toxin-like structure LSTX-D9 of Lycosa singoriensis (Wolf spider).